The following is a 156-amino-acid chain: Ribosomal RNA large subunit methyltransferase H (156 aa).

S-adenosyl-L-methionine-binding positions include Leu73, Gly104, and 123–128 (VSSLTL).

This sequence belongs to the RNA methyltransferase RlmH family. Homodimer.

Its subcellular location is the cytoplasm. The enzyme catalyses pseudouridine(1915) in 23S rRNA + S-adenosyl-L-methionine = N(3)-methylpseudouridine(1915) in 23S rRNA + S-adenosyl-L-homocysteine + H(+). Its function is as follows. Specifically methylates the pseudouridine at position 1915 (m3Psi1915) in 23S rRNA. This Paraburkholderia xenovorans (strain LB400) protein is Ribosomal RNA large subunit methyltransferase H.